Reading from the N-terminus, the 390-residue chain is Na(+)/H(+) antiporter NhaA (390 aa).

A run of 12 helical transmembrane segments spans residues 14–34 (AAGG…ANLN), 61–81 (MLLW…GLEV), 97–117 (SLPV…YLAF), 126–146 (AGWA…LALL), 156–176 (VFLM…IALF), 181–201 (LSMV…VLNL), 221–241 (VLKS…FVPL), 256–276 (ALHP…NAGV), 280–300 (GVTL…GLFI), 305–325 (GISL…PPGV), 330–350 (ILAV…IASL), and 362–382 (WAKL…YALL).

The protein belongs to the NhaA Na(+)/H(+) (TC 2.A.33) antiporter family.

Its subcellular location is the cell inner membrane. The enzyme catalyses Na(+)(in) + 2 H(+)(out) = Na(+)(out) + 2 H(+)(in). Its function is as follows. Na(+)/H(+) antiporter that extrudes sodium in exchange for external protons. In Cronobacter sakazakii (strain ATCC BAA-894) (Enterobacter sakazakii), this protein is Na(+)/H(+) antiporter NhaA.